Here is a 162-residue protein sequence, read N- to C-terminus: Non-specific lipid transfer protein GPI-anchored 27 (162 aa).

Positions 1 to 29 (MAYTNKVAVAVGAAVVFLAVVMNPRWTEA) are cleaved as a signal peptide. 4 disulfides stabilise this stretch: Cys39–Cys78, Cys50–Cys62, Cys63–Cys102, and Cys76–Cys110. Residue Asn68 is glycosylated (N-linked (GlcNAc...) asparagine). Residues Asn124 and Asn135 are each glycosylated (N-linked (GlcNAc...) asparagine). Residue Ser137 is the site of GPI-anchor amidated serine attachment. Residues 138–162 (VGGKNKVATSMSAFGLVAILLFVMF) constitute a propeptide, removed in mature form.

It belongs to the plant LTP family.

It is found in the cell membrane. Probable lipid transfer protein. In Arabidopsis thaliana (Mouse-ear cress), this protein is Non-specific lipid transfer protein GPI-anchored 27.